A 198-amino-acid polypeptide reads, in one-letter code: Large ribosomal subunit protein uL13B (198 aa).

An N-acetylserine; partial modification is found at serine 2. Serine 43 bears the Phosphoserine mark. A Glycyl lysine isopeptide (Lys-Gly) (interchain with G-Cter in ubiquitin) cross-link involves residue lysine 176. Phosphoserine occurs at positions 181, 185, and 187.

The protein belongs to the universal ribosomal protein uL13 family. As to quaternary structure, component of the large ribosomal subunit (LSU). Mature yeast ribosomes consist of a small (40S) and a large (60S) subunit. The 40S small subunit contains 1 molecule of ribosomal RNA (18S rRNA) and 33 different proteins (encoded by 57 genes). The large 60S subunit contains 3 rRNA molecules (25S, 5.8S and 5S rRNA) and 46 different proteins (encoded by 81 genes). In terms of processing, N-terminally acetylated by acetyltransferase NatA.

Its subcellular location is the cytoplasm. Component of the ribosome, a large ribonucleoprotein complex responsible for the synthesis of proteins in the cell. The small ribosomal subunit (SSU) binds messenger RNAs (mRNAs) and translates the encoded message by selecting cognate aminoacyl-transfer RNA (tRNA) molecules. The large subunit (LSU) contains the ribosomal catalytic site termed the peptidyl transferase center (PTC), which catalyzes the formation of peptide bonds, thereby polymerizing the amino acids delivered by tRNAs into a polypeptide chain. The nascent polypeptides leave the ribosome through a tunnel in the LSU and interact with protein factors that function in enzymatic processing, targeting, and the membrane insertion of nascent chains at the exit of the ribosomal tunnel. This is Large ribosomal subunit protein uL13B from Saccharomyces cerevisiae (strain ATCC 204508 / S288c) (Baker's yeast).